We begin with the raw amino-acid sequence, 90 residues long: Small ribosomal subunit protein bS20 (90 aa).

The disordered stretch occupies residues 1-28 (MPNTSSASKRLRQNEKRRLLNRATRSNM).

It belongs to the bacterial ribosomal protein bS20 family.

In terms of biological role, binds directly to 16S ribosomal RNA. This is Small ribosomal subunit protein bS20 from Rhodopirellula baltica (strain DSM 10527 / NCIMB 13988 / SH1).